We begin with the raw amino-acid sequence, 449 residues long: Glycine receptor subunit alpha-2 (449 aa).

Residues methionine 1–glycine 27 form the signal peptide. The Extracellular segment spans residues lysine 28–tyrosine 255. Residue asparagine 70 is glycosylated (N-linked (GlcNAc...) asparagine). Residues arginine 97 and serine 161 each coordinate glycine. Arginine 97 lines the strychnine pocket. A disulfide bridge links cysteine 170 with cysteine 184. The Zn(2+) site is built by glutamate 224 and aspartate 226. Cysteine 230 and cysteine 241 are joined by a disulfide. Threonine 236 lines the glycine pocket. Histidine 247 lines the Zn(2+) pocket. A helical membrane pass occupies residues leucine 256 to isoleucine 276. Topologically, residues asparagine 277–proline 282 are cytoplasmic. Residues alanine 283–serine 302 form a helical membrane-spanning segment. At arginine 303–lysine 313 the chain is on the extracellular side. The helical transmembrane segment at alanine 314 to alanine 334 threads the bilayer. The Cytoplasmic segment spans residues glycine 335–arginine 420. Residues alanine 421–isoleucine 441 form a helical membrane-spanning segment. Residues arginine 442–aspartate 449 are Extracellular-facing.

It belongs to the ligand-gated ion channel (TC 1.A.9) family.

It is found in the postsynaptic cell membrane. The protein resides in the synapse. Its subcellular location is the cell membrane. The protein localises to the cell projection. It catalyses the reaction chloride(in) = chloride(out). With respect to regulation, channel opening is triggered by extracellular glycine. Channel opening is also triggered by taurine and beta-alanine. Inhibited by strychnine. Functionally, subunit of heteromeric glycine-gated chloride channels. Plays a role in synaptic plasticity. Contributes to the generation of inhibitory postsynaptic currents, and is involved in the down-regulation of neuronal excitability. This Danio rerio (Zebrafish) protein is Glycine receptor subunit alpha-2 (glra2).